The primary structure comprises 301 residues: METLQNVVTGGKKGGCTSGSRPLRILLVGKSGCGKSATGNSLLRRPAFESRLRGQSVTRTSQAETGTWEGRSILVVDTPPIFESKAQNQDMDKDIGDCYLLCAPGPHVLLLVTQLGRFTAEDVMAVRMVKEVFGVGVMRHMIVLFTRKEDLAEKSLEEFVTHTDNRSLRSLVQECGRRYCAFNNRASGEEQQGQLAELMALVRRLEQECEGSFHSNDLFLHAETLLREGYSVHQEAYRCYLAKVRQEVEKQRWELEEQEGSWVLKVLPIGKKLEVLHSDFCWYLVLAILIFFVFFFLLFYV.

The Cytoplasmic portion of the chain corresponds to M1–D279. An AIG1-type G domain is found at S20 to E223. GTP-binding positions include G29–A37, S50, R147–E149, and N184. The segment at V263–V301 is required for targeting to the endoplasmic reticulum. A helical; Anchor for type IV membrane protein transmembrane segment spans residues F280–Y300. Residue V301 is a topological domain, lumenal.

Belongs to the TRAFAC class TrmE-Era-EngA-EngB-Septin-like GTPase superfamily. AIG1/Toc34/Toc159-like paraseptin GTPase family. IAN subfamily. Interacts with BAD, BAK1, BAX, BCL2, BCL2L1/Bcl-xL and BCL2L11/BimEL. The interaction with BAX is increased, when cells initiate apoptosis upon IL2 withdrawal. Expressed in thymus (in thymocytes), spleen (in splenocytes), lymph node and, at lower levels, in lung. Highly expressed in T lymphocytes.

It is found in the endoplasmic reticulum membrane. During thymocyte development, may support the positive selection of CD4 and CD8 T cells. May play a role in mitochondrial DNA segregation in hematopoietic tissues. Binds GTP. This chain is GTPase IMAP family member 3 (Gimap3), found in Mus musculus (Mouse).